Here is an 80-residue protein sequence, read N- to C-terminus: ATP synthase subunit c (80 aa).

The next 2 membrane-spanning stretches (helical) occupy residues 11–31 and 53–73; these read IAAA…IGIL and FFIV…LGLY.

It belongs to the ATPase C chain family. F-type ATPases have 2 components, F(1) - the catalytic core - and F(0) - the membrane proton channel. F(1) has five subunits: alpha(3), beta(3), gamma(1), delta(1), epsilon(1). F(0) has three main subunits: a(1), b(2) and c(10-14). The alpha and beta chains form an alternating ring which encloses part of the gamma chain. F(1) is attached to F(0) by a central stalk formed by the gamma and epsilon chains, while a peripheral stalk is formed by the delta and b chains.

It is found in the cell inner membrane. Functionally, f(1)F(0) ATP synthase produces ATP from ADP in the presence of a proton or sodium gradient. F-type ATPases consist of two structural domains, F(1) containing the extramembraneous catalytic core and F(0) containing the membrane proton channel, linked together by a central stalk and a peripheral stalk. During catalysis, ATP synthesis in the catalytic domain of F(1) is coupled via a rotary mechanism of the central stalk subunits to proton translocation. Its function is as follows. Key component of the F(0) channel; it plays a direct role in translocation across the membrane. A homomeric c-ring of between 10-14 subunits forms the central stalk rotor element with the F(1) delta and epsilon subunits. The protein is ATP synthase subunit c of Aeromonas hydrophila subsp. hydrophila (strain ATCC 7966 / DSM 30187 / BCRC 13018 / CCUG 14551 / JCM 1027 / KCTC 2358 / NCIMB 9240 / NCTC 8049).